Reading from the N-terminus, the 484-residue chain is Glutamyl-tRNA(Gln) amidotransferase subunit A (484 aa).

Residues K78 and S153 each act as charge relay system in the active site. The active-site Acyl-ester intermediate is S177.

This sequence belongs to the amidase family. GatA subfamily. As to quaternary structure, heterotrimer of A, B and C subunits.

It carries out the reaction L-glutamyl-tRNA(Gln) + L-glutamine + ATP + H2O = L-glutaminyl-tRNA(Gln) + L-glutamate + ADP + phosphate + H(+). Functionally, allows the formation of correctly charged Gln-tRNA(Gln) through the transamidation of misacylated Glu-tRNA(Gln) in organisms which lack glutaminyl-tRNA synthetase. The reaction takes place in the presence of glutamine and ATP through an activated gamma-phospho-Glu-tRNA(Gln). The chain is Glutamyl-tRNA(Gln) amidotransferase subunit A from Thermodesulfovibrio yellowstonii (strain ATCC 51303 / DSM 11347 / YP87).